The primary structure comprises 447 residues: NADH-ubiquinone oxidoreductase chain 4 (447 aa).

13 helical membrane-spanning segments follow: residues 28-48 (IFLA…FCDI), 56-76 (MISY…LMAS), 85-105 (YVNL…FTFS), 110-130 (FMFY…ILGW), 141-161 (IYLL…IFYI), 183-203 (FLYL…LVHL), 213-233 (PVSG…YGLL), 246-266 (FNYI…LICL), 273-293 (ALIA…LMTM), 301-321 (SYTL…LANI), 343-365 (SLSL…LNLL), 380-400 (LTMI…LYLF), and 409-431 (YSGV…LHWL).

It belongs to the complex I subunit 4 family.

The protein resides in the mitochondrion membrane. It catalyses the reaction a ubiquinone + NADH + 5 H(+)(in) = a ubiquinol + NAD(+) + 4 H(+)(out). In terms of biological role, core subunit of the mitochondrial membrane respiratory chain NADH dehydrogenase (Complex I) that is believed to belong to the minimal assembly required for catalysis. Complex I functions in the transfer of electrons from NADH to the respiratory chain. The immediate electron acceptor for the enzyme is believed to be ubiquinone. The chain is NADH-ubiquinone oxidoreductase chain 4 from Aedes aegypti (Yellowfever mosquito).